Here is a 511-residue protein sequence, read N- to C-terminus: Chromosomal replication initiator protein DnaA (511 aa).

The interval 1–90 is domain I, interacts with DnaA modulators; the sequence is MSVELWQQCV…RRSSAPRAAP (90 aa). A domain II region spans residues 91–174; sequence NAPVSAAMAA…QVEGALKHTS (84 aa). The disordered stretch occupies residues 125–161; the sequence is TAEPAQASDMAEASSRDSYDSMADSAPAPVAPGRTEQ. Residues 175–391 are domain III, AAA+ region; the sequence is YLNRTFTFET…GALKRVIAHS (217 aa). Residues G219, G221, K222, and T223 each coordinate ATP. A domain IV, binds dsDNA region spans residues 392-511; it reads HFMGRDITIE…YKNLLRTLTT (120 aa).

The protein belongs to the DnaA family. Oligomerizes as a right-handed, spiral filament on DNA at oriC.

The protein resides in the cytoplasm. In terms of biological role, plays an essential role in the initiation and regulation of chromosomal replication. ATP-DnaA binds to the origin of replication (oriC) to initiate formation of the DNA replication initiation complex once per cell cycle. Binds the DnaA box (a 9 base pair repeat at the origin) and separates the double-stranded (ds)DNA. Forms a right-handed helical filament on oriC DNA; dsDNA binds to the exterior of the filament while single-stranded (ss)DNA is stabiized in the filament's interior. The ATP-DnaA-oriC complex binds and stabilizes one strand of the AT-rich DNA unwinding element (DUE), permitting loading of DNA polymerase. After initiation quickly degrades to an ADP-DnaA complex that is not apt for DNA replication. Binds acidic phospholipids. The protein is Chromosomal replication initiator protein DnaA of Pseudomonas putida (strain W619).